We begin with the raw amino-acid sequence, 310 residues long: Coproporphyrin III ferrochelatase (310 aa).

Residues H184 and E265 each contribute to the Fe(2+) site.

It belongs to the ferrochelatase family.

It is found in the cytoplasm. The enzyme catalyses Fe-coproporphyrin III + 2 H(+) = coproporphyrin III + Fe(2+). It functions in the pathway porphyrin-containing compound metabolism; protoheme biosynthesis. Its function is as follows. Involved in coproporphyrin-dependent heme b biosynthesis. Catalyzes the insertion of ferrous iron into coproporphyrin III to form Fe-coproporphyrin III. This chain is Coproporphyrin III ferrochelatase, found in Limosilactobacillus reuteri (strain DSM 20016) (Lactobacillus reuteri).